We begin with the raw amino-acid sequence, 324 residues long: Beta-ketoacyl-[acyl-carrier-protein] synthase III (324 aa).

Catalysis depends on residues cysteine 113 and histidine 251. Residues glutamine 252 to arginine 256 form an ACP-binding region. The active site involves asparagine 281.

This sequence belongs to the thiolase-like superfamily. FabH family. As to quaternary structure, homodimer.

It is found in the cytoplasm. It catalyses the reaction malonyl-[ACP] + acetyl-CoA + H(+) = 3-oxobutanoyl-[ACP] + CO2 + CoA. The protein operates within lipid metabolism; fatty acid biosynthesis. Functionally, catalyzes the condensation reaction of fatty acid synthesis by the addition to an acyl acceptor of two carbons from malonyl-ACP. Catalyzes the first condensation reaction which initiates fatty acid synthesis and may therefore play a role in governing the total rate of fatty acid production. Possesses both acetoacetyl-ACP synthase and acetyl transacylase activities. Its substrate specificity determines the biosynthesis of branched-chain and/or straight-chain of fatty acids. The polypeptide is Beta-ketoacyl-[acyl-carrier-protein] synthase III (Bartonella bacilliformis (strain ATCC 35685 / KC583 / Herrer 020/F12,63)).